The sequence spans 164 residues: FMN reductase (NADH) RutF (164 aa).

It belongs to the non-flavoprotein flavin reductase family. RutF subfamily.

It catalyses the reaction FMNH2 + NAD(+) = FMN + NADH + 2 H(+). In terms of biological role, catalyzes the reduction of FMN to FMNH2 which is used to reduce pyrimidine by RutA via the Rut pathway. This chain is FMN reductase (NADH) RutF, found in Klebsiella variicola (strain At-22).